We begin with the raw amino-acid sequence, 1129 residues long: MSSSRPASSSSSRNRQSSQARVLAQTTLDAELNAEYEESGDSFDYSKLVEAQRDGPPVQQGRSEKVIAYLQHIQKGKLIQTFGCLLALDEKSFNVIAFSENAPEMLTTVSHAVPSVDDPPRLGIGTNVRSLFSDQGATALHKALGFADVSLLNPILVQCKTSGKPFYAIVHRATGCLVVDFEPVKPTEFPATAAGALQSYKLAAKAISKIQSLPGGSMEVLCNTVVKEVFDLTGYDRVMAYKFHEDDHGEVFSEITKPGLEPYLGLHYPATDIPQAARLLFMKNKVRMICDCRARSIKVIEAEALPFDISLCGSALRAPHSCHLQYMENMNSIASLVMAVVVNENEEDDEAESEQPAQQQKKKKLWGLLVCHHESPRYVPFPLRYACEFLAQVFAVHVNREFELEKQLREKNILKMQTMLSDMLFREASPLTIVSGTPNIMDLVKCDGAALLYGGKVWRLRNAPTESQIHDIAFWLSDVHRDSTGLSTDSLHDAGYPGAAALGDMICGMAVAKINSKDILFWFRSHTAAEIRWGGAKNDPSDMDDSRRMHPRLSFKAFLEVVKMKSLPWSDYEMDAIHSLQLILRGTLNDASKPKREASLDNQIGDLKLDGLAELQAVTSEMVRLMETATVPILAVDGNGLVNGWNQKAAELTGLRVDDAIGRHILTLVEDSSVPVVQRMLYLALQGKEEKEVRFEVKTHGPKRDDGPVILVVNACASRDLHDHVVGVCFVAQDMTVHKLVMDKFTRVEGDYKAIIHNPNPLIPPIFGADEFGWCSEWNAAMTKLTGWNRDEVLDKMLLGEVFDSSNASCPLKNRDAFVSLCVLINSALAGEETEKAPFGFFDRSGKYIECLLSANRKENEGGLITGVFCFIHVASHELQHALQVQQASEQTSLKRLKAFSYMRHAINNPLSGMLYSRKALKNTDLNEEQMKQIHVGDNCHHQINKILADLDQDSITEKSSCLDLEMAEFLLQDVVVAAVSQVLITCQGKGIRISCNLPERFMKQSVYGDGVRLQQILSDFLFISVKFSPVGGSVEISSKLTKNSIGENLHLIDLELRIKHQGLGVPAELMAQMFEEDNKEQSEEGLSLLVSRNLLRLMNGDVRHLREAGVSTFIITAELASAPTAMGQ.

A compositionally biased stretch (low complexity) spans 1 to 21 (MSSSRPASSSSSRNRQSSQAR). The segment at 1-24 (MSSSRPASSSSSRNRQSSQARVLA) is disordered. Residues 217–402 (SMEVLCNTVV…VFAVHVNREF (186 aa)) enclose the GAF domain. Cys322 serves as a coordination point for phytochromobilin. 2 PAS domains span residues 618–688 (VTSE…LQGK) and 748–822 (VEGD…VSLC). The region spanning 902–1122 (YMRHAINNPL…TFIITAELAS (221 aa)) is the Histidine kinase domain.

This sequence belongs to the phytochrome family. Homodimer. In terms of processing, contains one covalently linked phytochromobilin chromophore.

In terms of biological role, regulatory photoreceptor which exists in two forms that are reversibly interconvertible by light: the Pr form that absorbs maximally in the red region of the spectrum and the Pfr form that absorbs maximally in the far-red region. Photoconversion of Pr to Pfr induces an array of morphogenic responses, whereas reconversion of Pfr to Pr cancels the induction of those responses. Pfr controls the expression of a number of nuclear genes including those encoding the small subunit of ribulose-bisphosphate carboxylase, chlorophyll A/B binding protein, protochlorophyllide reductase, rRNA, etc. It also controls the expression of its own gene(s) in a negative feedback fashion. This Avena sativa (Oat) protein is Phytochrome A type 3 (PHYA3).